Here is a 454-residue protein sequence, read N- to C-terminus: Protein odr-4 homolog (454 aa).

Helical transmembrane passes span 82–102 (MLPG…ELAN) and 432–452 (IGVI…FHYF).

The protein belongs to the ODR-4 family. As to expression, ubiquitously expressed.

Its subcellular location is the membrane. In terms of biological role, may play a role in the trafficking of a subset of G-protein coupled receptors. This chain is Protein odr-4 homolog, found in Homo sapiens (Human).